A 125-amino-acid polypeptide reads, in one-letter code: Histone H2A (125 aa).

The segment covering 1–18 (MSGRGKGGKAKAKAKSRS) has biased composition (basic residues). The interval 1–21 (MSGRGKGGKAKAKAKSRSSRA) is disordered. Serine 2 is modified (N-acetylserine). An N5-methylglutamine modification is found at glutamine 104.

The protein belongs to the histone H2A family. In terms of assembly, the nucleosome is a histone octamer containing two molecules each of H2A, H2B, H3 and H4 assembled in one H3-H4 heterotetramer and two H2A-H2B heterodimers. The octamer wraps approximately 147 bp of DNA.

The protein localises to the nucleus. The protein resides in the chromosome. Core component of nucleosome. Nucleosomes wrap and compact DNA into chromatin, limiting DNA accessibility to the cellular machineries which require DNA as a template. Histones thereby play a central role in transcription regulation, DNA repair, DNA replication and chromosomal stability. DNA accessibility is regulated via a complex set of post-translational modifications of histones, also called histone code, and nucleosome remodeling. This Mytilus californianus (California mussel) protein is Histone H2A.